The following is a 142-amino-acid chain: MEIIPHRHPFLLIDRVLELEPGRRVVAVKNVSMNEPVFQGHYPGNPIFPGVLILEAMAQAGAVAVLSQPEFAGKVPLFAGIDDARFRRPVLPGDQLRLEVEMVAMRRGLGVGKGMAYVGDELKAEATLKFALVDAATPEPAR.

His41 is an active-site residue.

It belongs to the thioester dehydratase family. FabZ subfamily.

Its subcellular location is the cytoplasm. The enzyme catalyses a (3R)-hydroxyacyl-[ACP] = a (2E)-enoyl-[ACP] + H2O. Functionally, involved in unsaturated fatty acids biosynthesis. Catalyzes the dehydration of short chain beta-hydroxyacyl-ACPs and long chain saturated and unsaturated beta-hydroxyacyl-ACPs. This chain is 3-hydroxyacyl-[acyl-carrier-protein] dehydratase FabZ, found in Symbiobacterium thermophilum (strain DSM 24528 / JCM 14929 / IAM 14863 / T).